The chain runs to 235 residues: uncharacterized protein (235 aa).

2 disordered regions span residues 1–36 (MGML…GRGS) and 213–235 (VKTR…ILEQ).

This is an uncharacterized protein from Homo sapiens (Human).